Here is a 358-residue protein sequence, read N- to C-terminus: Carbamoyl phosphate synthase small chain (358 aa).

The segment at 1-172 is CPSase; that stretch reads MKAALALEDG…EAKRFESDGD (172 aa). L-glutamine-binding residues include Ser-45, Gly-222, and Gly-224. Positions 174–358 constitute a Glutamine amidotransferase type-1 domain; it reads EVVLVDCGVK…RYVDMLREYR (185 aa). Residue Cys-249 is the Nucleophile of the active site. Positions 250, 253, 291, and 294 each coordinate L-glutamine. Catalysis depends on residues His-333 and Glu-335.

It belongs to the CarA family. In terms of assembly, composed of two chains; the small (or glutamine) chain promotes the hydrolysis of glutamine to ammonia, which is used by the large (or ammonia) chain to synthesize carbamoyl phosphate. Tetramer of heterodimers (alpha,beta)4.

The catalysed reaction is hydrogencarbonate + L-glutamine + 2 ATP + H2O = carbamoyl phosphate + L-glutamate + 2 ADP + phosphate + 2 H(+). The enzyme catalyses L-glutamine + H2O = L-glutamate + NH4(+). It functions in the pathway amino-acid biosynthesis; L-arginine biosynthesis; carbamoyl phosphate from bicarbonate: step 1/1. The protein operates within pyrimidine metabolism; UMP biosynthesis via de novo pathway; (S)-dihydroorotate from bicarbonate: step 1/3. Its function is as follows. Small subunit of the glutamine-dependent carbamoyl phosphate synthetase (CPSase). CPSase catalyzes the formation of carbamoyl phosphate from the ammonia moiety of glutamine, carbonate, and phosphate donated by ATP, constituting the first step of 2 biosynthetic pathways, one leading to arginine and/or urea and the other to pyrimidine nucleotides. The small subunit (glutamine amidotransferase) binds and cleaves glutamine to supply the large subunit with the substrate ammonia. The polypeptide is Carbamoyl phosphate synthase small chain (Archaeoglobus fulgidus (strain ATCC 49558 / DSM 4304 / JCM 9628 / NBRC 100126 / VC-16)).